Reading from the N-terminus, the 430-residue chain is GTPase Obg (430 aa).

In terms of domain architecture, Obg spans 1–158 (MFIDTAKVFV…LNIVLELKLL (158 aa)). The OBG-type G domain occupies 159 to 331 (ADVGLLGFPN…VMKEAARILK (173 aa)). GTP-binding positions include 165–172 (GFPNVGKS), 190–194 (FTTLK), 212–215 (DIPG), 282–285 (NKSD), and 312–314 (SAA). Residues serine 172 and threonine 192 each contribute to the Mg(2+) site. Residues 345 to 430 (MYIPEEKRFT…LNDFEFEYIL (86 aa)) form the OCT domain.

It belongs to the TRAFAC class OBG-HflX-like GTPase superfamily. OBG GTPase family. In terms of assembly, monomer. Mg(2+) is required as a cofactor.

The protein localises to the cytoplasm. Its function is as follows. An essential GTPase which binds GTP, GDP and possibly (p)ppGpp with moderate affinity, with high nucleotide exchange rates and a fairly low GTP hydrolysis rate. Plays a role in control of the cell cycle, stress response, ribosome biogenesis and in those bacteria that undergo differentiation, in morphogenesis control. The chain is GTPase Obg from Clostridium beijerinckii (strain ATCC 51743 / NCIMB 8052) (Clostridium acetobutylicum).